Consider the following 239-residue polypeptide: Cysteine-rich venom protein (239 aa).

The signal sequence occupies residues M1 to A18. Residues V37–Y165 form the SCP domain. Disulfide bonds link C74-C152, C91-C166, C147-C163, C185-C192, C188-C197, C210-C228, and C219-C232. The ShKT domain maps to C201–C234.

This sequence belongs to the CRISP family. Expressed by the venom gland.

Its subcellular location is the secreted. Functionally, blocks contraction of smooth muscle elicited by high potassium-induced depolarization, but does not block caffeine-stimulated contraction. May target voltage-gated calcium channels on smooth muscle. The chain is Cysteine-rich venom protein from Cerberus rynchops (Dog-faced water snake).